Here is a 727-residue protein sequence, read N- to C-terminus: Pentatricopeptide repeat-containing protein At4g20740 (727 aa).

The disordered stretch occupies residues 1–84 (MKSPKPPNLS…PSPPSHSTVI (84 aa)). A compositionally biased stretch (polar residues) spans 38-56 (SNRQSIPRVSPQPQSNSLA). Positions 59-70 (TPFDLRKWDPET) are enriched in basic and acidic residues. PPR repeat units lie at residues 157 to 191 (DFAA…GRPP), 192 to 226 (SEKQ…GFKP), 227 to 261 (RVFL…GLVE), 262 to 296 (ESTT…LCKP), 297 to 331 (DVFA…EIKP), 332 to 366 (DVMA…QILI), 367 to 401 (DREI…GYIA), 402 to 436 (DIGI…ELEP), 437 to 471 (DFET…GYPV), 506 to 540 (SVSV…GFEP), 541 to 575 (DSSS…SCVP), 576 to 606 (SIAA…CLGN), 612 to 646 (MEFK…GVFI), and 647 to 681 (NEVI…KVMT).

The protein belongs to the PPR family. P subfamily.

The protein is Pentatricopeptide repeat-containing protein At4g20740 of Arabidopsis thaliana (Mouse-ear cress).